A 489-amino-acid chain; its full sequence is Protein LMBR1L (489 aa).

At 1–21 the chain is on the extracellular side; that stretch reads MEAADYEVLSVREQLFHDRVR. The segment at 1–59 is interaction with LGB; the sequence is MEAADYEVLSVREQLFHDRVRECIISILLFATLYILCHIFLTRFKKPAEFTTVDDEDAT. The interval 1 to 76 is LCN1-binding; that stretch reads MEAADYEVLS…LCTFTLAVAL (76 aa). Residues 22–42 traverse the membrane as a helical segment; that stretch reads ECIISILLFATLYILCHIFLT. Over 43–66 the chain is Cytoplasmic; sequence RFKKPAEFTTVDDEDATVNKIALE. Residues 67 to 87 form a helical membrane-spanning segment; that stretch reads LCTFTLAVALGAVLLLPFSII. Residues 88–114 are Extracellular-facing; it reads SNEVLLSLPRNYYIQWLNGSLIHGLWN. The chain crosses the membrane as a helical span at residues 115 to 135; sequence LVFLFSNLSLVFLMPFAYFFT. Residues 136 to 154 lie on the Cytoplasmic side of the membrane; the sequence is ESEGFAGSRKGVLGRVYET. Residues 155 to 175 traverse the membrane as a helical segment; it reads VVMLILLTLLVLGMVWVASAI. The Extracellular segment spans residues 176 to 196; sequence VDNDKASRESLYDFWEYYLPY. A helical transmembrane segment spans residues 197 to 217; sequence LYSCISFLGVLLLLVCTPLGL. Over 218 to 305 the chain is Cytoplasmic; that stretch reads ARMFSVTGKL…NLGYPLAMLC (88 aa). A helical membrane pass occupies residues 306–326; that stretch reads LLVLTGLSVLIVAVHILELLI. Residues 327–350 lie on the Extracellular side of the membrane; that stretch reads DEAAMPRGMQDAALGQASFSKLGS. The helical transmembrane segment at 351–371 threads the bilayer; the sequence is FGAIIQVVLIFYLMVSSVVGF. Over 372 to 388 the chain is Cytoplasmic; sequence YSSPLFGSLRPRWHDTS. Residues 389–409 traverse the membrane as a helical segment; it reads MTQIIGNCVCLLVLSSALPVF. Over 410-431 the chain is Extracellular; sequence SRTLGLTRFDLLGDFGRFNWLG. The chain crosses the membrane as a helical span at residues 432–452; sequence NFYIVFLYNAAFAGLTTLCLV. The Cytoplasmic segment spans residues 453–489; the sequence is KTFTAAVRAELIRAFGLDRLPLPVSGFPRASRKKQHQ.

It belongs to the LIMR family. In terms of assembly, dimer. Can also form higher oligomers. Interacts with LCN1; this interaction mediates the endocytosis of LCN1. Interacts with UBAC2, FAF2, VCP, AMFR, ZNRF3, CTNNB1, LRP6, GSK3B, FZD6, DVL2 and RNF43. Interacts with GSK3A. Interaction with LGB and SCGB1A1 is controversial. Highly expressed in the bone marrow, thymus, spleen and lymphocytes.

The protein resides in the cell membrane. It localises to the endoplasmic reticulum membrane. In terms of biological role, plays an essential role in lymphocyte development by negatively regulating the canonical Wnt signaling pathway. In association with UBAC2 and E3 ubiquitin-protein ligase AMFR, promotes the ubiquitin-mediated degradation of CTNNB1 and Wnt receptors FZD6 and LRP6. LMBR1L stabilizes the beta-catenin destruction complex that is required for regulating CTNNB1 levels. Acts as a LCN1 receptor and can mediate its endocytosis. The sequence is that of Protein LMBR1L (Lmbr1l) from Mus musculus (Mouse).